We begin with the raw amino-acid sequence, 449 residues long: tRNA modification GTPase MnmE (449 aa).

(6S)-5-formyl-5,6,7,8-tetrahydrofolate-binding residues include Arg-24, Glu-81, and Lys-121. The 158-residue stretch at 218–375 folds into the TrmE-type G domain; it reads GLVVAITGPP…LIAALGKFAA (158 aa). GTP is bound by residues 228 to 233, 247 to 253, and 272 to 275; these read NVGKST, SPHAGTT, and DTAG. Mg(2+) is bound by residues Ser-232 and Thr-253. Lys-449 provides a ligand contact to (6S)-5-formyl-5,6,7,8-tetrahydrofolate.

The protein belongs to the TRAFAC class TrmE-Era-EngA-EngB-Septin-like GTPase superfamily. TrmE GTPase family. Homodimer. Heterotetramer of two MnmE and two MnmG subunits. K(+) is required as a cofactor.

It is found in the cytoplasm. Its function is as follows. Exhibits a very high intrinsic GTPase hydrolysis rate. Involved in the addition of a carboxymethylaminomethyl (cmnm) group at the wobble position (U34) of certain tRNAs, forming tRNA-cmnm(5)s(2)U34. The chain is tRNA modification GTPase MnmE from Rhodopseudomonas palustris (strain BisB18).